A 503-amino-acid chain; its full sequence is UDP-N-acetylmuramoylalanine--D-glutamate ligase (503 aa).

129–135 (GTNGKTT) is an ATP binding site.

The protein belongs to the MurCDEF family.

The protein resides in the cytoplasm. The enzyme catalyses UDP-N-acetyl-alpha-D-muramoyl-L-alanine + D-glutamate + ATP = UDP-N-acetyl-alpha-D-muramoyl-L-alanyl-D-glutamate + ADP + phosphate + H(+). The protein operates within cell wall biogenesis; peptidoglycan biosynthesis. Functionally, cell wall formation. Catalyzes the addition of glutamate to the nucleotide precursor UDP-N-acetylmuramoyl-L-alanine (UMA). The chain is UDP-N-acetylmuramoylalanine--D-glutamate ligase from Burkholderia multivorans (strain ATCC 17616 / 249).